We begin with the raw amino-acid sequence, 233 residues long: Uridylate kinase (233 aa).

9 to 10 (GS) contributes to the ATP binding site. Residue G43 coordinates UMP. Residues G44 and R48 each coordinate ATP. UMP-binding positions include D65 and 113–119 (VTPGQTT). ATP contacts are provided by T139, Y145, and D148.

This sequence belongs to the UMP kinase family. Homohexamer.

The protein resides in the cytoplasm. The enzyme catalyses UMP + ATP = UDP + ADP. Its pathway is pyrimidine metabolism; CTP biosynthesis via de novo pathway; UDP from UMP (UMPK route): step 1/1. Inhibited by UTP. Its function is as follows. Catalyzes the reversible phosphorylation of UMP to UDP. The sequence is that of Uridylate kinase from Methanosarcina mazei (strain ATCC BAA-159 / DSM 3647 / Goe1 / Go1 / JCM 11833 / OCM 88) (Methanosarcina frisia).